The sequence spans 442 residues: Proline--tRNA ligase (442 aa).

This sequence belongs to the class-II aminoacyl-tRNA synthetase family. ProS type 2 subfamily. In terms of assembly, homodimer.

It is found in the cytoplasm. The enzyme catalyses tRNA(Pro) + L-proline + ATP = L-prolyl-tRNA(Pro) + AMP + diphosphate. In terms of biological role, catalyzes the attachment of proline to tRNA(Pro) in a two-step reaction: proline is first activated by ATP to form Pro-AMP and then transferred to the acceptor end of tRNA(Pro). This chain is Proline--tRNA ligase, found in Mesorhizobium japonicum (strain LMG 29417 / CECT 9101 / MAFF 303099) (Mesorhizobium loti (strain MAFF 303099)).